Here is a 273-residue protein sequence, read N- to C-terminus: Large ribosomal subunit protein uL2 (273 aa).

Disordered regions lie at residues 28-53 (KPFAPLVEKNSKSGGRNNNGRITTRH) and 221-273 (RGTA…RRSK). Low complexity predominate over residues 39–48 (KSGGRNNNGR).

It belongs to the universal ribosomal protein uL2 family. As to quaternary structure, part of the 50S ribosomal subunit. Forms a bridge to the 30S subunit in the 70S ribosome.

Its function is as follows. One of the primary rRNA binding proteins. Required for association of the 30S and 50S subunits to form the 70S ribosome, for tRNA binding and peptide bond formation. It has been suggested to have peptidyltransferase activity; this is somewhat controversial. Makes several contacts with the 16S rRNA in the 70S ribosome. The polypeptide is Large ribosomal subunit protein uL2 (Enterobacter sp. (strain 638)).